A 325-amino-acid polypeptide reads, in one-letter code: GMP reductase (325 aa).

C173 acts as the Thioimidate intermediate in catalysis. Residue I202 to V225 coordinates NADP(+).

This sequence belongs to the IMPDH/GMPR family. GuaC type 2 subfamily.

It carries out the reaction IMP + NH4(+) + NADP(+) = GMP + NADPH + 2 H(+). Functionally, catalyzes the irreversible NADPH-dependent deamination of GMP to IMP. It functions in the conversion of nucleobase, nucleoside and nucleotide derivatives of G to A nucleotides, and in maintaining the intracellular balance of A and G nucleotides. The chain is GMP reductase from Paracidovorax citrulli (strain AAC00-1) (Acidovorax citrulli).